Here is a 153-residue protein sequence, read N- to C-terminus: Transcriptional repressor NrdR 2 (153 aa).

Residues 3–34 (CPFCGQDDTQVKDSRPTDDNAAIRRRRACPGC) fold into a zinc finger. Residues 49-139 (LVVVKKDGSR…VYRNFREAKD (91 aa)) enclose the ATP-cone domain.

This sequence belongs to the NrdR family. It depends on Zn(2+) as a cofactor.

Negatively regulates transcription of bacterial ribonucleotide reductase nrd genes and operons by binding to NrdR-boxes. The sequence is that of Transcriptional repressor NrdR 2 from Paramagnetospirillum magneticum (strain ATCC 700264 / AMB-1) (Magnetospirillum magneticum).